Here is a 226-residue protein sequence, read N- to C-terminus: Transcriptional regulatory protein CitT (226 aa).

The region spanning 3–119 (HIAIAEDDFR…KFRQVLLQYK (117 aa)) is the Response regulatory domain. At aspartate 54 the chain carries 4-aspartylphosphate. The segment at residues 178 to 197 (AEELGEKMGASRTTARRYAE) is a DNA-binding region (H-T-H motif).

Post-translationally, phosphorylated by CitS.

The protein resides in the cytoplasm. In terms of biological role, member of the two-component regulatory system CitT/CitS. Regulates the expression of the citM-yflN operon. Phosphorylated CitT binds to the citM promoter to activate the transcription of the citM-yflN operon. The chain is Transcriptional regulatory protein CitT (citT) from Bacillus subtilis (strain 168).